We begin with the raw amino-acid sequence, 630 residues long: 1-deoxy-D-xylulose-5-phosphate synthase (630 aa).

Residues His-87 and 128-130 each bind thiamine diphosphate; that span reads GHS. Asp-159 is a Mg(2+) binding site. Residues 160–161, Asn-188, Phe-295, and Glu-377 contribute to the thiamine diphosphate site; that span reads GA. Asn-188 provides a ligand contact to Mg(2+).

The protein belongs to the transketolase family. DXPS subfamily. As to quaternary structure, homodimer. Mg(2+) serves as cofactor. It depends on thiamine diphosphate as a cofactor.

The catalysed reaction is D-glyceraldehyde 3-phosphate + pyruvate + H(+) = 1-deoxy-D-xylulose 5-phosphate + CO2. It participates in metabolic intermediate biosynthesis; 1-deoxy-D-xylulose 5-phosphate biosynthesis; 1-deoxy-D-xylulose 5-phosphate from D-glyceraldehyde 3-phosphate and pyruvate: step 1/1. Catalyzes the acyloin condensation reaction between C atoms 2 and 3 of pyruvate and glyceraldehyde 3-phosphate to yield 1-deoxy-D-xylulose-5-phosphate (DXP). The protein is 1-deoxy-D-xylulose-5-phosphate synthase of Pseudomonas savastanoi pv. phaseolicola (strain 1448A / Race 6) (Pseudomonas syringae pv. phaseolicola (strain 1448A / Race 6)).